The sequence spans 104 residues: MDKIRKSDEVIVLTGKDKGKRGVVQRRVDANYLVVEGVNVAKKATKPNPMTGATGGIVDKLMPIHVSNVALFNAATGKADRAGFKDVDGKKVRVYKSSGEAVKV.

The protein belongs to the universal ribosomal protein uL24 family. As to quaternary structure, part of the 50S ribosomal subunit.

Its function is as follows. One of two assembly initiator proteins, it binds directly to the 5'-end of the 23S rRNA, where it nucleates assembly of the 50S subunit. One of the proteins that surrounds the polypeptide exit tunnel on the outside of the subunit. The chain is Large ribosomal subunit protein uL24 from Herminiimonas arsenicoxydans.